Reading from the N-terminus, the 1135-residue chain is DNA-directed RNA polymerase subunit beta' (1135 aa).

Zn(2+)-binding residues include Cys-60, Cys-62, Cys-75, and Cys-78. Residues Asp-450, Asp-452, and Asp-454 each coordinate Mg(2+). Residues Cys-795, Cys-869, Cys-876, and Cys-879 each coordinate Zn(2+).

Belongs to the RNA polymerase beta' chain family. As to quaternary structure, the RNAP catalytic core consists of 2 alpha, 1 beta, 1 beta' and 1 omega subunit. When a sigma factor is associated with the core the holoenzyme is formed, which can initiate transcription. Mg(2+) serves as cofactor. Requires Zn(2+) as cofactor.

The catalysed reaction is RNA(n) + a ribonucleoside 5'-triphosphate = RNA(n+1) + diphosphate. Functionally, DNA-dependent RNA polymerase catalyzes the transcription of DNA into RNA using the four ribonucleoside triphosphates as substrates. In Clostridium tetani (strain Massachusetts / E88), this protein is DNA-directed RNA polymerase subunit beta'.